Consider the following 605-residue polypeptide: Elongation factor 4 (605 aa).

The tr-type G domain maps to 9–192; that stretch reads SRIRNFCIIA…AIIARVPSPA (184 aa). GTP-binding positions include 21 to 26 and 139 to 142; these read DHGKST and NKID.

This sequence belongs to the TRAFAC class translation factor GTPase superfamily. Classic translation factor GTPase family. LepA subfamily.

The protein localises to the cell inner membrane. The enzyme catalyses GTP + H2O = GDP + phosphate + H(+). In terms of biological role, required for accurate and efficient protein synthesis under certain stress conditions. May act as a fidelity factor of the translation reaction, by catalyzing a one-codon backward translocation of tRNAs on improperly translocated ribosomes. Back-translocation proceeds from a post-translocation (POST) complex to a pre-translocation (PRE) complex, thus giving elongation factor G a second chance to translocate the tRNAs correctly. Binds to ribosomes in a GTP-dependent manner. The polypeptide is Elongation factor 4 (Chlorobium phaeovibrioides (strain DSM 265 / 1930) (Prosthecochloris vibrioformis (strain DSM 265))).